Reading from the N-terminus, the 447-residue chain is Oxysterols receptor LXR-alpha (447 aa).

Residues 1 to 88 are disordered; the sequence is MSLWLEAPVP…LRPQKRKKGP (88 aa). Residues 1–96 are transactivation AF-1; required for ligand-independent transactivation function; it reads MSLWLEAPVP…GPAPKMLGNE (96 aa). The segment at residues 95–170 is a DNA-binding region (nuclear receptor); it reads NELCSVCGDK…AGMREECVLS (76 aa). 2 NR C4-type zinc fingers span residues 98 to 118 and 134 to 158; these read CSVCGDKASGFHYNVLSCEGC and CHSGGHCPMDTYMRRKCQECRLRKC. Positions 178-203 are disordered; the sequence is KMKRQEEEQAQATSAPPRASSPPQVL. The segment covering 187–203 has biased composition (low complexity); the sequence is AQATSAPPRASSPPQVL. Residues 205-447 form a transactivation AF-2; required for ligand-dependent transactivation function; mediates interaction with CCAR2 region; that stretch reads QLSPEQLGMI…LLSEIWDVHE (243 aa). Residues 209–447 form the NR LBD domain; it reads EQLGMIEKLV…LLSEIWDVHE (239 aa).

The protein belongs to the nuclear hormone receptor family. NR1 subfamily. Heterodimer of NR1H3 and RXR (retinoic acid receptor). Interacts with CCAR2 (via N-terminus) in a ligand-independent manner. Interacts with SIRT1 and this interaction is inhibited by CCAR2. Post-translationally, ubiquitinated by UBR5, leading to its degradation: UBR5 specifically recognizes and binds ligand-bound NR1H3 when it is not associated with coactivators (NCOAs). In presence of NCOAs, the UBR5-degron is not accessible, preventing its ubiquitination and degradation.

The protein resides in the nucleus. The protein localises to the cytoplasm. Nuclear receptor that exhibits a ligand-dependent transcriptional activation activity. Interaction with retinoic acid receptor (RXR) shifts RXR from its role as a silent DNA-binding partner to an active ligand-binding subunit in mediating retinoid responses through target genes defined by LXRES. LXRES are DR4-type response elements characterized by direct repeats of two similar hexanuclotide half-sites spaced by four nucleotides. Plays an important role in the regulation of cholesterol homeostasis, regulating cholesterol uptake through MYLIP-dependent ubiquitination of LDLR, VLDLR and LRP8. Interplays functionally with RORA for the regulation of genes involved in liver metabolism. Induces LPCAT3-dependent phospholipid remodeling in endoplasmic reticulum (ER) membranes of hepatocytes, driving SREBF1 processing and lipogenesis. Via LPCAT3, triggers the incorporation of arachidonate into phosphatidylcholines of ER membranes, increasing membrane dynamics and enabling triacylglycerols transfer to nascent very low-density lipoprotein (VLDL) particles. Via LPCAT3 also counteracts lipid-induced ER stress response and inflammation, likely by modulating SRC kinase membrane compartmentalization and limiting the synthesis of lipid inflammatory mediators. This Bos taurus (Bovine) protein is Oxysterols receptor LXR-alpha (NR1H3).